The chain runs to 339 residues: Uroporphyrinogen decarboxylase (339 aa).

Residues 21 to 25, Asp71, Tyr146, Ser201, and His316 contribute to the substrate site; that span reads RQAGR.

The protein belongs to the uroporphyrinogen decarboxylase family. In terms of assembly, homodimer.

The protein localises to the cytoplasm. The enzyme catalyses uroporphyrinogen III + 4 H(+) = coproporphyrinogen III + 4 CO2. Its pathway is porphyrin-containing compound metabolism; protoporphyrin-IX biosynthesis; coproporphyrinogen-III from 5-aminolevulinate: step 4/4. In terms of biological role, catalyzes the decarboxylation of four acetate groups of uroporphyrinogen-III to yield coproporphyrinogen-III. This is Uroporphyrinogen decarboxylase from Rickettsia canadensis (strain McKiel).